A 164-amino-acid polypeptide reads, in one-letter code: CB1 cannabinoid receptor-interacting protein 1 (164 aa).

Belongs to the CNRIP family. As to quaternary structure, interacts with the cannabinoid receptor CNR1 (via C-terminus). Does not interact with cannabinoid receptor CNR2.

In terms of biological role, suppresses cannabinoid receptor CNR1-mediated tonic inhibition of voltage-gated calcium channels. The chain is CB1 cannabinoid receptor-interacting protein 1 (CNRIP1) from Bos taurus (Bovine).